The chain runs to 195 residues: Large ribosomal subunit protein uL5 (195 aa).

Positions 1-25 (MARVPPPALKKDKKEKKPPKDNSKN) are disordered.

The protein belongs to the universal ribosomal protein uL5 family. Component of the large ribosomal subunit.

The protein localises to the nucleus. The protein resides in the cytoplasm. Component of the ribosome, a large ribonucleoprotein complex responsible for the synthesis of proteins in the cell. The small ribosomal subunit (SSU) binds messenger RNAs (mRNAs) and translates the encoded message by selecting cognate aminoacyl-transfer RNA (tRNA) molecules. The large subunit (LSU) contains the ribosomal catalytic site termed the peptidyl transferase center (PTC), which catalyzes the formation of peptide bonds, thereby polymerizing the amino acids delivered by tRNAs into a polypeptide chain. The nascent polypeptides leave the ribosome through a tunnel in the LSU and interact with protein factors that function in enzymatic processing, targeting, and the membrane insertion of nascent chains at the exit of the ribosomal tunnel. In Spodoptera frugiperda (Fall armyworm), this protein is Large ribosomal subunit protein uL5 (RpL11).